The primary structure comprises 306 residues: Choline-binding protein (306 aa).

The signal sequence occupies residues 1–22; that stretch reads MKRKYLKLMIGLALAATLTLSG. Cysteine 23 carries the N-palmitoyl cysteine lipid modification. Cysteine 23 is lipidated: S-diacylglycerol cysteine.

It belongs to the OsmX family.

The protein resides in the cell membrane. Member of a high affinity multicomponent binding-protein-dependent transport system for choline. In Bacillus subtilis (strain 168), this protein is Choline-binding protein (opuBC).